We begin with the raw amino-acid sequence, 174 residues long: MTTIVSVRRNGHVVIGGDGQVTLGNTVMKGNAKKVRRLYNNKVIAGFAGGTADAFTLFELFERKLEMHQGHLTKAAVELAKDWRTDRMLRKLEALLAVADETASLIITGNGDVVQPEDDLIAIGSGGPYAQSAARALLENTELGARDIVEKSLSIAGDICIYTNRFQTIEELTY.

T2 is an active-site residue. Na(+) is bound by residues G157, C160, and T163.

The protein belongs to the peptidase T1B family. HslV subfamily. In terms of assembly, a double ring-shaped homohexamer of HslV is capped on each side by a ring-shaped HslU homohexamer. The assembly of the HslU/HslV complex is dependent on binding of ATP.

It is found in the cytoplasm. It catalyses the reaction ATP-dependent cleavage of peptide bonds with broad specificity.. Allosterically activated by HslU binding. In terms of biological role, protease subunit of a proteasome-like degradation complex believed to be a general protein degrading machinery. The polypeptide is ATP-dependent protease subunit HslV (Yersinia enterocolitica serotype O:8 / biotype 1B (strain NCTC 13174 / 8081)).